Here is a 401-residue protein sequence, read N- to C-terminus: tRNA N6-adenosine threonylcarbamoyltransferase (401 aa).

Fe cation contacts are provided by histidine 111 and histidine 115. Residues 191–195 (LASGG), aspartate 223, glycine 236, and asparagine 336 each bind substrate. Residue aspartate 364 participates in Fe cation binding.

This sequence belongs to the KAE1 / TsaD family. The cofactor is Fe(2+).

The protein localises to the cytoplasm. The catalysed reaction is L-threonylcarbamoyladenylate + adenosine(37) in tRNA = N(6)-L-threonylcarbamoyladenosine(37) in tRNA + AMP + H(+). Functionally, required for the formation of a threonylcarbamoyl group on adenosine at position 37 (t(6)A37) in tRNAs that read codons beginning with adenine. Is involved in the transfer of the threonylcarbamoyl moiety of threonylcarbamoyl-AMP (TC-AMP) to the N6 group of A37, together with TsaE and TsaB. TsaD likely plays a direct catalytic role in this reaction. This Tropheryma whipplei (strain TW08/27) (Whipple's bacillus) protein is tRNA N6-adenosine threonylcarbamoyltransferase.